The chain runs to 355 residues: Holliday junction branch migration complex subunit RuvB (355 aa).

Residues 4-190 are large ATPase domain (RuvB-L); the sequence is TDKLAAERII…FGIVARLEFY (187 aa). ATP contacts are provided by residues L29, R30, G71, K74, T75, T76, 137–139, R180, Y190, and R227; that span reads EDY. T75 contacts Mg(2+). Residues 191-261 are small ATPAse domain (RuvB-S); that stretch reads NAEQLARIVT…VADAALKMLD (71 aa). The segment at 264 to 355 is head domain (RuvB-H); it reads AVGFDLMDRK…LPGLWDSAAT (92 aa). Residues R300, R319, and R324 each contribute to the DNA site.

It belongs to the RuvB family. In terms of assembly, homohexamer. Forms an RuvA(8)-RuvB(12)-Holliday junction (HJ) complex. HJ DNA is sandwiched between 2 RuvA tetramers; dsDNA enters through RuvA and exits via RuvB. An RuvB hexamer assembles on each DNA strand where it exits the tetramer. Each RuvB hexamer is contacted by two RuvA subunits (via domain III) on 2 adjacent RuvB subunits; this complex drives branch migration. In the full resolvosome a probable DNA-RuvA(4)-RuvB(12)-RuvC(2) complex forms which resolves the HJ.

It localises to the cytoplasm. It carries out the reaction ATP + H2O = ADP + phosphate + H(+). Functionally, the RuvA-RuvB-RuvC complex processes Holliday junction (HJ) DNA during genetic recombination and DNA repair, while the RuvA-RuvB complex plays an important role in the rescue of blocked DNA replication forks via replication fork reversal (RFR). RuvA specifically binds to HJ cruciform DNA, conferring on it an open structure. The RuvB hexamer acts as an ATP-dependent pump, pulling dsDNA into and through the RuvAB complex. RuvB forms 2 homohexamers on either side of HJ DNA bound by 1 or 2 RuvA tetramers; 4 subunits per hexamer contact DNA at a time. Coordinated motions by a converter formed by DNA-disengaged RuvB subunits stimulates ATP hydrolysis and nucleotide exchange. Immobilization of the converter enables RuvB to convert the ATP-contained energy into a lever motion, pulling 2 nucleotides of DNA out of the RuvA tetramer per ATP hydrolyzed, thus driving DNA branch migration. The RuvB motors rotate together with the DNA substrate, which together with the progressing nucleotide cycle form the mechanistic basis for DNA recombination by continuous HJ branch migration. Branch migration allows RuvC to scan DNA until it finds its consensus sequence, where it cleaves and resolves cruciform DNA. The sequence is that of Holliday junction branch migration complex subunit RuvB from Paraburkholderia xenovorans (strain LB400).